Here is a 283-residue protein sequence, read N- to C-terminus: Thymidylate synthase (283 aa).

Arginine 22 contacts dUMP. Cysteine 160 serves as the catalytic Nucleophile. DUMP-binding positions include 180 to 183 (RSCD), asparagine 191, and 221 to 223 (HIY). A (6R)-5,10-methylene-5,6,7,8-tetrahydrofolate-binding site is contributed by aspartate 183. Serine 282 contributes to the (6R)-5,10-methylene-5,6,7,8-tetrahydrofolate binding site.

It belongs to the thymidylate synthase family. Bacterial-type ThyA subfamily. As to quaternary structure, homodimer.

Its subcellular location is the cytoplasm. The enzyme catalyses dUMP + (6R)-5,10-methylene-5,6,7,8-tetrahydrofolate = 7,8-dihydrofolate + dTMP. Its pathway is pyrimidine metabolism; dTTP biosynthesis. Its function is as follows. Catalyzes the reductive methylation of 2'-deoxyuridine-5'-monophosphate (dUMP) to 2'-deoxythymidine-5'-monophosphate (dTMP) while utilizing 5,10-methylenetetrahydrofolate (mTHF) as the methyl donor and reductant in the reaction, yielding dihydrofolate (DHF) as a by-product. This enzymatic reaction provides an intracellular de novo source of dTMP, an essential precursor for DNA biosynthesis. In Histophilus somni (strain 129Pt) (Haemophilus somnus), this protein is Thymidylate synthase.